A 28-amino-acid polypeptide reads, in one-letter code: Short cationic peptide-1a (28 aa).

Position 28 is a glutamic acid 1-amide (glutamate 28).

Expressed by the venom gland.

It localises to the secreted. The sequence is that of Short cationic peptide-1a from Cupiennius salei (American wandering spider).